The primary structure comprises 202 residues: 3-isopropylmalate dehydratase small subunit (202 aa).

Belongs to the LeuD family. LeuD type 1 subfamily. In terms of assembly, heterodimer of LeuC and LeuD.

The enzyme catalyses (2R,3S)-3-isopropylmalate = (2S)-2-isopropylmalate. It functions in the pathway amino-acid biosynthesis; L-leucine biosynthesis; L-leucine from 3-methyl-2-oxobutanoate: step 2/4. In terms of biological role, catalyzes the isomerization between 2-isopropylmalate and 3-isopropylmalate, via the formation of 2-isopropylmaleate. This chain is 3-isopropylmalate dehydratase small subunit, found in Rhizobium johnstonii (strain DSM 114642 / LMG 32736 / 3841) (Rhizobium leguminosarum bv. viciae).